We begin with the raw amino-acid sequence, 107 residues long: Metallothionein-1 (107 aa).

The protein belongs to the metallothionein superfamily. Type 7 family.

The metallothioneins are involved in the cellular sequestration of toxic metal ions. Binds 12 cadmium ions per molecule. The sequence is that of Metallothionein-1 from Tetrahymena thermophila.